A 192-amino-acid polypeptide reads, in one-letter code: Ras-like GTP-binding protein Rho1 (192 aa).

GTP is bound at residue 12–19 (GDGACGKT). The Effector region signature appears at 34–42 (YVPTVFENY). GTP-binding positions include 59–63 (DTAGQ) and 117–120 (NKKD). C189 is subject to Cysteine methyl ester. Residue C189 is the site of S-geranylgeranyl cysteine attachment. Positions 190–192 (LLL) are cleaved as a propeptide — removed in mature form.

Belongs to the small GTPase superfamily. Rho family. In terms of assembly, interacts with capu. Interacts (via REM repeats) with Pkn (via N-terminus). Interacts (via N-terminus) with wash (via N-terminus). May interact with dia/diaphanous (via CBD/FH3 domain). As to expression, expressed in hemocytes (at protein level).

It is found in the cell membrane. It localises to the cytoplasm. The protein resides in the cytoskeleton. Its subcellular location is the apical cell membrane. The protein localises to the lateral cell membrane. Has a role in regulating actin cytoskeletal organization: required during early development for proper execution of morphogenetic movements of individual cells and groups of cells important for the formation of the embryonic body plan. Plays a role in regulating dorsal closure during embryogenesis. During axis elongation, required for Rho-kinase Rok planar polarity and adherens junction localization as well as for generating a planar polarized distribution of the actin-binding protein Shrm. During embryogenesis, acts upstream of wash to regulate the developmental migration of tail hemocytes anteriorly along the ventral midline. May have a role in eye development. Involved in targeted recruitment of dia/diaphanous to apical membranes of polarized epithelial cells. The sequence is that of Ras-like GTP-binding protein Rho1 from Drosophila melanogaster (Fruit fly).